The chain runs to 72 residues: uncharacterized protein (72 aa).

Residues 27–55 (YTQNLINELQEARDSINDLQRAHERLKLV) adopt a coiled-coil conformation.

This is an uncharacterized protein from Schizosaccharomyces pombe (strain 972 / ATCC 24843) (Fission yeast).